Here is a 746-residue protein sequence, read N- to C-terminus: Actin filament-associated protein 1-like 1 (746 aa).

The interval 88-206 (EDQKKEPEAN…RLTHQWPSEE (119 aa)) is disordered. The segment covering 98 to 107 (HTVTKPSKTD) has biased composition (polar residues). Positions 108–119 (SPPPLPNTPPPE) are enriched in pro residues. Residues 139-148 (SRSSSSPPNS) are compositionally biased toward low complexity. The PH 1 domain maps to 214–310 (DCHICAFLLR…WLHVVRDVTG (97 aa)). The disordered stretch occupies residues 336 to 371 (EKQTSDSDSMPSGESARDIRENGKPKRGALSELTGT). Residues 350-359 (SARDIRENGK) show a composition bias toward basic and acidic residues. A PH 2 domain is found at 406 to 497 (RCGYVGVLVN…WLGVLLAETG (92 aa)). Disordered stretches follow at residues 539-596 (EVPF…TRAQ) and 723-746 (PSIY…KKGT). Over residues 562 to 575 (SFSSSDTGKPSPQI) the composition is skewed to polar residues. Residues 591–682 (GKTRAQEDAR…VKENLKKSLA (92 aa)) adopt a coiled-coil conformation. A compositionally biased stretch (basic and acidic residues) spans 736-746 (KAKEWESKKGT).

It is found in the cytoplasm. It localises to the cell projection. Its subcellular location is the podosome. The protein resides in the invadopodium. The protein localises to the cytoskeleton. It is found in the stress fiber. Functionally, may be involved in podosome and invadosome formation. The sequence is that of Actin filament-associated protein 1-like 1 (afap1l1) from Danio rerio (Zebrafish).